We begin with the raw amino-acid sequence, 438 residues long: Glyceraldehyde-3-phosphate dehydrogenase B, chloroplastic (438 aa).

The N-terminal 53 residues, 1–53 (CLSKKFEVAEFAGLRSSGCVTFSNKESSFFDVVSAQLTPKTTRSTPVKGETVA), are a transit peptide targeting the chloroplast. NADP(+) is bound by residues 64-65 (RI), aspartate 88, and arginine 133. D-glyceraldehyde 3-phosphate-binding positions include 207–209 (SCT), threonine 238, arginine 253, 266–267 (TG), and arginine 289. Cysteine 208 functions as the Nucleophile in the catalytic mechanism. Asparagine 372 provides a ligand contact to NADP(+).

The protein belongs to the glyceraldehyde-3-phosphate dehydrogenase family. Tetramer of either four A chains (GAPDH 2) or two A and two B chains (GAPDH 1).

The protein resides in the plastid. It is found in the chloroplast. The catalysed reaction is D-glyceraldehyde 3-phosphate + phosphate + NADP(+) = (2R)-3-phospho-glyceroyl phosphate + NADPH + H(+). It participates in carbohydrate biosynthesis; Calvin cycle. In Nicotiana tabacum (Common tobacco), this protein is Glyceraldehyde-3-phosphate dehydrogenase B, chloroplastic (GAPB).